Consider the following 274-residue polypeptide: NAD-dependent protein deacetylase (274 aa).

A Deacetylase sirtuin-type domain is found at 1 to 274 (MDSRMSDLQA…CDEVLAEVVS (274 aa)). Residues 26-46 (GAGC…GQWK) and 104-107 (QNVD) each bind NAD(+). Catalysis depends on H122, which acts as the Proton acceptor. Residues C130, C133, C181, and C184 each coordinate Zn(2+). Residues 221–223 (GSS), 247–249 (NLG), and C265 contribute to the NAD(+) site.

Belongs to the sirtuin family. Class II subfamily. The cofactor is Zn(2+).

It localises to the cytoplasm. The catalysed reaction is N(6)-acetyl-L-lysyl-[protein] + NAD(+) + H2O = 2''-O-acetyl-ADP-D-ribose + nicotinamide + L-lysyl-[protein]. Functionally, NAD-dependent protein deacetylase which modulates the activities of several enzymes which are inactive in their acetylated form. The chain is NAD-dependent protein deacetylase from Bordetella bronchiseptica (strain ATCC BAA-588 / NCTC 13252 / RB50) (Alcaligenes bronchisepticus).